A 259-amino-acid chain; its full sequence is Putative carbamate hydrolase RutD (259 aa).

It belongs to the AB hydrolase superfamily. Hydrolase RutD family.

The enzyme catalyses carbamate + 2 H(+) = NH4(+) + CO2. Involved in pyrimidine catabolism. May facilitate the hydrolysis of carbamate, a reaction that can also occur spontaneously. The sequence is that of Putative carbamate hydrolase RutD from Pseudomonas savastanoi pv. phaseolicola (strain 1448A / Race 6) (Pseudomonas syringae pv. phaseolicola (strain 1448A / Race 6)).